The following is a 262-amino-acid chain: MIDKTAFIHPTAIVEEGAVIGANAHIGPFCIVGPDVKIGEGTVLKSHVVVNGHTTIGRDNEIYQFASIGEVNQDLKYAGEPTRVEIGDRNRIRESVTIHRGTAQGGGLTKVGSDNLLMINAHVAHDCTVGNRCILANNATLAGHVSVDDFAIIGGMTAVHQFCIIGAHVMVGGCSGVAQDVPPYVIAQGNHATPFGVNIEGLKRRGFSKEALHAIRNAYKLLYRSGKTLDEVKPEIAEIAAKHPEVQPFYDFFARSTRGLIR.

Belongs to the transferase hexapeptide repeat family. LpxA subfamily. As to quaternary structure, homotrimer.

The protein resides in the cytoplasm. The catalysed reaction is a (3R)-hydroxyacyl-[ACP] + UDP-N-acetyl-alpha-D-glucosamine = a UDP-3-O-[(3R)-3-hydroxyacyl]-N-acetyl-alpha-D-glucosamine + holo-[ACP]. It participates in glycolipid biosynthesis; lipid IV(A) biosynthesis; lipid IV(A) from (3R)-3-hydroxytetradecanoyl-[acyl-carrier-protein] and UDP-N-acetyl-alpha-D-glucosamine: step 1/6. Functionally, involved in the biosynthesis of lipid A, a phosphorylated glycolipid that anchors the lipopolysaccharide to the outer membrane of the cell. This chain is Acyl-[acyl-carrier-protein]--UDP-N-acetylglucosamine O-acyltransferase, found in Cronobacter sakazakii (strain ATCC BAA-894) (Enterobacter sakazakii).